A 158-amino-acid chain; its full sequence is Transcription elongation factor GreA (158 aa).

The protein belongs to the GreA/GreB family.

Functionally, necessary for efficient RNA polymerase transcription elongation past template-encoded arresting sites. The arresting sites in DNA have the property of trapping a certain fraction of elongating RNA polymerases that pass through, resulting in locked ternary complexes. Cleavage of the nascent transcript by cleavage factors such as GreA or GreB allows the resumption of elongation from the new 3'terminus. GreA releases sequences of 2 to 3 nucleotides. The polypeptide is Transcription elongation factor GreA (Bacillus licheniformis (strain ATCC 14580 / DSM 13 / JCM 2505 / CCUG 7422 / NBRC 12200 / NCIMB 9375 / NCTC 10341 / NRRL NRS-1264 / Gibson 46)).